Consider the following 352-residue polypeptide: Glycerol-1-phosphate dehydrogenase [NAD(P)+] (352 aa).

NAD(+) is bound by residues 99 to 103 (GAKID) and 121 to 124 (TAPS). Aspartate 126 serves as a coordination point for substrate. Serine 130 lines the NAD(+) pocket. Aspartate 173 contacts substrate. Aspartate 173 and histidine 253 together coordinate Zn(2+). Histidine 257 serves as a coordination point for substrate. Histidine 269 contributes to the Zn(2+) binding site.

The protein belongs to the glycerol-1-phosphate dehydrogenase family. It depends on Zn(2+) as a cofactor.

It localises to the cytoplasm. It carries out the reaction sn-glycerol 1-phosphate + NAD(+) = dihydroxyacetone phosphate + NADH + H(+). The enzyme catalyses sn-glycerol 1-phosphate + NADP(+) = dihydroxyacetone phosphate + NADPH + H(+). It participates in membrane lipid metabolism; glycerophospholipid metabolism. Catalyzes the NAD(P)H-dependent reduction of dihydroxyacetonephosphate (DHAP or glycerone phosphate) to glycerol 1-phosphate (G1P). The G1P thus generated is used as the glycerophosphate backbone of phospholipids in the cellular membranes of Archaea. This Thermoplasma acidophilum (strain ATCC 25905 / DSM 1728 / JCM 9062 / NBRC 15155 / AMRC-C165) protein is Glycerol-1-phosphate dehydrogenase [NAD(P)+].